A 343-amino-acid polypeptide reads, in one-letter code: Ribosomal RNA-processing protein 8 (343 aa).

The disordered stretch occupies residues 1–123 (MGKKRKITDE…NDDVAAAPEE (123 aa)). The segment covering 7–33 (ITDEKDAQHVPAEKREKVENWLKKSTE) has biased composition (basic and acidic residues). Composition is skewed to basic residues over residues 45-59 (KKKRPWRNKVRKLAA) and 89-101 (KKKRKRGPKKKKF). Residues 112–123 (TENDDVAAAPEE) show a composition bias toward acidic residues. Residues His-169, Gly-204, Asp-224, Asp-236, Met-237, and Cys-253 each coordinate S-adenosyl-L-methionine.

This sequence belongs to the methyltransferase superfamily. RRP8 family.

Its subcellular location is the nucleus. It localises to the nucleolus. Its function is as follows. Probable methyltransferase required to silence rDNA. Involved in regulation of antisense ribosomal siRNA production. Required for the N1-methyladenosine modification of 26S rRNAs. This is Ribosomal RNA-processing protein 8 (rrp-8) from Caenorhabditis elegans.